The sequence spans 537 residues: Tyrosine-protein kinase Fyn (537 aa).

Gly2 is lipidated: N-myristoyl glycine. Residues Cys3 and Cys6 are each lipidated (S-palmitoyl cysteine). The residue at position 12 (Thr12) is a Phosphothreonine; by PKC. Residues Ser21 and Ser26 each carry the phosphoserine modification. The 62-residue stretch at 82–143 folds into the SH3 domain; sequence TGVTLFVALY…PSNYVAPVDS (62 aa). An SH2 domain is found at 149 to 246; that stretch reads WYFGKLGRKD…GLCCRLVVPC (98 aa). A Phosphotyrosine modification is found at Tyr185. Positions 271-524 constitute a Protein kinase domain; that stretch reads LQLIKRLGNG…YLQGFLEDYF (254 aa). ATP-binding positions include 277-285 and Lys299; that span reads LGNGQFGEV. The active-site Proton acceptor is Asp390. Tyr420 is subject to Phosphotyrosine; by autocatalysis. Tyr531 is subject to Phosphotyrosine; by CSK.

Belongs to the protein kinase superfamily. Tyr protein kinase family. SRC subfamily. As to quaternary structure, interacts (via its SH3 domain) with PIK3R1 and PRMT8. Interacts with FYB1, PAG1, and SH2D1A. Interacts with CD79A (tyrosine-phosphorylated form); the interaction increases FYN activity. Interacts (via SH2 domain) with CSF1R (tyrosine phosphorylated). Interacts with TOM1L1 (phosphorylated form). Interacts with KDR (tyrosine phosphorylated). Interacts (via SH3 domain) with KLHL2 (via N-terminus). Interacts with SH2D1A and SLAMF1. Interacts with ITCH; the interaction phosphorylates ITCH and negatively regulates its activity. Interacts with FASLG. Interacts with RUNX3. Interacts with KIT. Interacts with EPHA8; possible downstream effector of EPHA8 in regulation of cell adhesion. Interacts with PTK2/FAK1; this interaction leads to PTK2/FAK1 phosphorylation and activation. Interacts with CAV1; this interaction couples integrins to the Ras-ERK pathway. Interacts with UNC119. Interacts (via SH2 domain) with PTPRH (phosphorylated form). Interacts with PTPRO (phosphorylated form). Interacts with PTPRB (phosphorylated form). Interacts with FYB2. Interacts with DSCAM. Interacts with SKAP1 and FYB1; this interaction promotes the phosphorylation of CLNK. Interacts with NEDD9; in the presence of PTK2. Requires Mn(2+) as cofactor. Autophosphorylated at Tyr-420. Phosphorylation on the C-terminal tail at Tyr-531 by CSK maintains the enzyme in an inactive state. PTPRC/CD45 dephosphorylates Tyr-531 leading to activation. Ultraviolet B (UVB) strongly increase phosphorylation at Thr-12 and kinase activity, and promotes translocation from the cytoplasm to the nucleus. Dephosphorylation at Tyr-420 by PTPN2 negatively regulates T-cell receptor signaling. Phosphorylated at tyrosine residues, which can be enhanced by NTN1. In terms of processing, palmitoylated. Palmitoylation at Cys-3 and Cys-6, probably by ZDHHC21, regulates subcellular location.

Its subcellular location is the cytoplasm. It is found in the nucleus. The protein localises to the cell membrane. The protein resides in the perikaryon. It catalyses the reaction L-tyrosyl-[protein] + ATP = O-phospho-L-tyrosyl-[protein] + ADP + H(+). Its activity is regulated as follows. Inhibited by phosphorylation of Tyr-531 by leukocyte common antigen and activated by dephosphorylation of this site. Non-receptor tyrosine-protein kinase that plays a role in many biological processes including regulation of cell growth and survival, cell adhesion, integrin-mediated signaling, cytoskeletal remodeling, cell motility, immune response and axon guidance. Inactive FYN is phosphorylated on its C-terminal tail within the catalytic domain. Following activation by PKA, the protein subsequently associates with PTK2/FAK1, allowing PTK2/FAK1 phosphorylation, activation and targeting to focal adhesions. Involved in the regulation of cell adhesion and motility through phosphorylation of CTNNB1 (beta-catenin) and CTNND1 (delta-catenin). Regulates cytoskeletal remodeling by phosphorylating several proteins including the actin regulator WAS and the microtubule-associated proteins MAP2 and MAPT. Promotes cell survival by phosphorylating AGAP2/PIKE-A and preventing its apoptotic cleavage. Participates in signal transduction pathways that regulate the integrity of the glomerular slit diaphragm (an essential part of the glomerular filter of the kidney) by phosphorylating several slit diaphragm components including NPHS1, KIRREL1 and TRPC6. Plays a role in neural processes by phosphorylating DPYSL2, a multifunctional adapter protein within the central nervous system, ARHGAP32, a regulator for Rho family GTPases implicated in various neural functions, and SNCA, a small pre-synaptic protein. Involved in reelin signaling by mediating phosphorylation of DAB1 following reelin (RELN)-binding to its receptor. Participates in the downstream signaling pathways that lead to T-cell differentiation and proliferation following T-cell receptor (TCR) stimulation. Phosphorylates PTK2B/PYK2 in response to T-cell receptor activation. Also participates in negative feedback regulation of TCR signaling through phosphorylation of PAG1, thereby promoting interaction between PAG1 and CSK and recruitment of CSK to lipid rafts. CSK maintains LCK and FYN in an inactive form. Promotes CD28-induced phosphorylation of VAV1. In mast cells, phosphorylates CLNK after activation of immunoglobulin epsilon receptor signaling. Can also promote CD244-mediated NK cell activation. In Sus scrofa (Pig), this protein is Tyrosine-protein kinase Fyn.